A 595-amino-acid chain; its full sequence is Inactive glycosyltransferase 25 family member 3 (595 aa).

A signal peptide spans 1–22; it reads MRAARAAPLLQLLLLLGPWLEA. 4 N-linked (GlcNAc...) asparagine glycosylation sites follow: N75, N153, N237, and N360. Residues 548–595 form a disordered region; sequence DTETSSPWDDDSGRLISWSGSQKTLRSPRLDLTGSSGHSLQPQPRDEL. The segment covering 580-589 has biased composition (polar residues); sequence TGSSGHSLQP. The short motif at 592–595 is the Prevents secretion from ER element; the sequence is RDEL.

Belongs to the glycosyltransferase 25 family. As to expression, ubiquitous. Highly expressed in secretory and nervous tissues.

Its subcellular location is the endoplasmic reticulum lumen. Probable cell adhesion protein involved in leukocyte transmigration across the blood-brain barrier. Does not express any beta-galactosyltransferase activity in vitro. The chain is Inactive glycosyltransferase 25 family member 3 (CERCAM) from Homo sapiens (Human).